The chain runs to 136 residues: Protein PsiE (136 aa).

The next 4 helical transmembrane spans lie at 15–35 (ILQT…VVFL), 55–75 (YELV…ALIV), 82–102 (FHFP…RLII), and 108–128 (PLDV…LWLC).

Belongs to the PsiE family.

Its subcellular location is the cell inner membrane. The protein is Protein PsiE of Escherichia coli (strain UTI89 / UPEC).